The sequence spans 384 residues: Odorant receptor 33c (384 aa).

The Cytoplasmic portion of the chain corresponds to 1-35; that stretch reads MVIIDSLSFYRPFWICMRLLVPTFFKDSSRPVQLY. Residues 36-56 traverse the membrane as a helical segment; that stretch reads VVLLHILVTLWFPLHLLLHLL. Residues 57 to 63 are Extracellular-facing; sequence LLPSTAE. The helical transmembrane segment at 64-84 threads the bilayer; it reads FFKNLTMSLTCVACSLKHVAH. The Cytoplasmic segment spans residues 85–128; sequence LYHLPQIVEIESLIEQLDTFIASEQEHRYYRDHVHCHARRFTRC. A helical transmembrane segment spans residues 129–149; it reads LYISFGMIYALFLFGVFVQVI. Residues 150–169 lie on the Extracellular side of the membrane; the sequence is SGNWELLYPAYFPFDLESNR. The chain crosses the membrane as a helical span at residues 170–190; the sequence is FLGAVALGYQVFSMLVEGFQG. At 191–251 the chain is on the cytoplasmic side; it reads LGNDTYTPLT…LVRFHNLVSR (61 aa). A helical transmembrane segment spans residues 252–272; that stretch reads TISEVQLVQLGGCGATLCIIV. The Extracellular portion of the chain corresponds to 273–274; sequence SY. A helical membrane pass occupies residues 275–295; sequence MLFFVGDTISLVYYLVFFGVV. Topologically, residues 296-358 are cytoplasmic; that stretch reads CVQLFPSCYF…WIIKAGGLIE (63 aa). Residues 359-379 form a helical membrane-spanning segment; sequence LNLNAFFATLKMAYSLFAVVV. Topologically, residues 380–384 are extracellular; the sequence is RAKGI.

It belongs to the insect chemoreceptor superfamily. Heteromeric odorant receptor channel (TC 1.A.69) family. Or2a subfamily. As to quaternary structure, interacts with Orco. Complexes exist early in the endomembrane system in olfactory sensory neurons (OSNs), coupling these complexes to the conserved ciliary trafficking pathway. Expressed in the antenna and in a subset of 18 olfactory receptor neurons in the maxillary palp.

The protein localises to the cell membrane. In terms of biological role, odorant receptor which mediates acceptance or avoidance behavior, depending on its substrates. The odorant receptor repertoire encodes a large collection of odor stimuli that vary widely in identity, intensity, and duration. May form a complex with Orco to form odorant-sensing units, providing sensitive and prolonged odorant signaling and calcium permeability. This chain is Odorant receptor 33c (Or33c), found in Drosophila melanogaster (Fruit fly).